Reading from the N-terminus, the 199-residue chain is MKFSPLVDELIQSLRALPGVGPKSAQRMAFQLLERERKVGLKLADSLQKAMSEVGHCQSCRTFTEQDLCPICSSHRRINTGIICVVETPADVLAIEAGGHFNGRYFVLLGHLSPLDGVGPEELGLALLERHLTSNEVSELILATNPTVEGDATAHFIADMARRHNVVISRIAHGVPVGGELEYVDSTTLALSFNGRIPL.

Residues 57-72 form a C4-type zinc finger; sequence CQSCRTFTEQDLCPIC. Positions 81–176 constitute a Toprim domain; it reads GIICVVETPA…VISRIAHGVP (96 aa).

This sequence belongs to the RecR family.

In terms of biological role, may play a role in DNA repair. It seems to be involved in an RecBC-independent recombinational process of DNA repair. It may act with RecF and RecO. The protein is Recombination protein RecR of Shewanella frigidimarina (strain NCIMB 400).